The following is a 338-amino-acid chain: Malate dehydrogenase, mitochondrial (338 aa).

The transit peptide at 1-24 (MLSALARPAGAALRRSFSTSAQNN) directs the protein to the mitochondrion. Residues 31 to 37 (GASGGIG) and Asp57 each bind NAD(+). The O-linked (GalNAc...) serine glycan is linked to Ser33. An N6-acetyllysine; alternate mark is found at Lys78 and Lys91. An N6-succinyllysine; alternate mark is found at Lys78 and Lys91. Substrate is bound by residues Arg104 and Arg110. NAD(+) is bound by residues Asn117 and 140–142 (ISN). Asn142 lines the substrate pocket. Lys165 is subject to N6-acetyllysine. Catalysis depends on Asp173, which acts as the Proton relay. Arg176 provides a ligand contact to substrate. The residue at position 185 (Lys185) is an N6-acetyllysine; alternate. The residue at position 185 (Lys185) is an N6-succinyllysine; alternate. The Proton acceptor role is filled by His200. Lys203 carries the post-translational modification N6-succinyllysine. 2 positions are modified to N6-acetyllysine; alternate: Lys215 and Lys239. Residues Lys215 and Lys239 each carry the N6-succinyllysine; alternate modification. Lys239 bears the N6-malonyllysine; alternate mark. Phosphoserine is present on Ser246. Met251 is a binding site for NAD(+). Position 269 is an N6-succinyllysine (Lys269). N6-acetyllysine; alternate is present on residues Lys296, Lys301, Lys307, Lys314, and Lys324. Residues Lys296, Lys301, Lys307, Lys314, and Lys324 each carry the N6-succinyllysine; alternate modification. N6-malonyllysine; alternate is present on Lys307. Ser326 is modified (phosphoserine). N6-acetyllysine; alternate is present on residues Lys328, Lys329, and Lys335. N6-succinyllysine; alternate is present on Lys328. N6-malonyllysine; alternate is present on Lys329. Lys335 is subject to N6-succinyllysine; alternate.

The protein belongs to the LDH/MDH superfamily. MDH type 1 family. Homodimer. Acetylation is enhanced after treatment either with trichostin A (TSA) or with nicotinamide (NAM) with the appearance of tri- and tetraacetylations. Glucose also increases acetylation. Ubiquitously expressed. Highly expressed in skeletal muscle and heart. Also expressed in liver, ileum, colon, kidney and adipose tissue, and at very low levels in lung, pancreas, stomach and spleen.

The protein localises to the mitochondrion matrix. It catalyses the reaction (S)-malate + NAD(+) = oxaloacetate + NADH + H(+). Enzyme activity is enhanced by acetylation. The polypeptide is Malate dehydrogenase, mitochondrial (Felis catus (Cat)).